The sequence spans 487 residues: Betaine aldehyde dehydrogenase (487 aa).

The K(+) site is built by Ser-26 and Asp-93. Gly-150–Trp-152 contributes to the NAD(+) binding site. Residue Lys-162 is the Charge relay system of the active site. Residues Lys-176 to Glu-179 and Ser-229 to Thr-232 each bind NAD(+). Leu-244 contributes to the K(+) binding site. Glu-250 functions as the Proton acceptor in the catalytic mechanism. NAD(+)-binding residues include Gly-252, Cys-284, and Glu-384. The active-site Nucleophile is the Cys-284. Cys-284 carries the cysteine sulfenic acid (-SOH) modification. Positions 454 and 457 each coordinate K(+). Catalysis depends on Glu-461, which acts as the Charge relay system.

Belongs to the aldehyde dehydrogenase family. Dimer of dimers. Requires K(+) as cofactor.

The catalysed reaction is betaine aldehyde + NAD(+) + H2O = glycine betaine + NADH + 2 H(+). Its pathway is amine and polyamine biosynthesis; betaine biosynthesis via choline pathway; betaine from betaine aldehyde: step 1/1. Involved in the biosynthesis of the osmoprotectant glycine betaine. Catalyzes the irreversible oxidation of betaine aldehyde to the corresponding acid. The polypeptide is Betaine aldehyde dehydrogenase (Rhizobium etli (strain ATCC 51251 / DSM 11541 / JCM 21823 / NBRC 15573 / CFN 42)).